Reading from the N-terminus, the 111-residue chain is uncharacterized protein (111 aa).

3 consecutive transmembrane segments (helical) span residues 4-22, 49-71, and 91-108; these read FWIL…QFFI, LLIL…LFFI, and YMYH…LIYV.

The protein resides in the cell membrane. This is an uncharacterized protein from Bacillus subtilis (strain 168).